The primary structure comprises 156 residues: Cellulose synthase operon protein D (156 aa).

It participates in glycan metabolism; bacterial cellulose biosynthesis. May have a major role in the perfection of crystallization, involved either in the pore structure itself or in the organization of the pores within the linear array of terminal synthesizing complexes (TCs). The chain is Cellulose synthase operon protein D from Komagataeibacter xylinus (Gluconacetobacter xylinus).